The chain runs to 413 residues: Multifunctional CCA protein (413 aa).

ATP is bound by residues Gly-8 and Arg-11. CTP is bound by residues Gly-8 and Arg-11. Residues Glu-21 and Asp-23 each contribute to the Mg(2+) site. Positions 91, 137, and 140 each coordinate ATP. The CTP site is built by Arg-91, Arg-137, and Arg-140. The region spanning 228-329 is the HD domain; that stretch reads TGEHTLLALA…LKLLEGLDLF (102 aa).

It belongs to the tRNA nucleotidyltransferase/poly(A) polymerase family. Bacterial CCA-adding enzyme type 1 subfamily. Monomer. Can also form homodimers and oligomers. It depends on Mg(2+) as a cofactor. Ni(2+) is required as a cofactor.

It carries out the reaction a tRNA precursor + 2 CTP + ATP = a tRNA with a 3' CCA end + 3 diphosphate. The catalysed reaction is a tRNA with a 3' CCA end + 2 CTP + ATP = a tRNA with a 3' CCACCA end + 3 diphosphate. Catalyzes the addition and repair of the essential 3'-terminal CCA sequence in tRNAs without using a nucleic acid template. Adds these three nucleotides in the order of C, C, and A to the tRNA nucleotide-73, using CTP and ATP as substrates and producing inorganic pyrophosphate. tRNA 3'-terminal CCA addition is required both for tRNA processing and repair. Also involved in tRNA surveillance by mediating tandem CCA addition to generate a CCACCA at the 3' terminus of unstable tRNAs. While stable tRNAs receive only 3'-terminal CCA, unstable tRNAs are marked with CCACCA and rapidly degraded. The sequence is that of Multifunctional CCA protein from Alkalilimnicola ehrlichii (strain ATCC BAA-1101 / DSM 17681 / MLHE-1).